Consider the following 313-residue polypeptide: Aspartate carbamoyltransferase catalytic subunit (313 aa).

Arg-58 and Thr-59 together coordinate carbamoyl phosphate. Lys-86 contributes to the L-aspartate binding site. 3 residues coordinate carbamoyl phosphate: Arg-108, His-136, and Gln-139. Positions 169 and 223 each coordinate L-aspartate. The carbamoyl phosphate site is built by Gly-265 and Pro-266.

Belongs to the aspartate/ornithine carbamoyltransferase superfamily. ATCase family. Heterododecamer (2C3:3R2) of six catalytic PyrB chains organized as two trimers (C3), and six regulatory PyrI chains organized as three dimers (R2).

It carries out the reaction carbamoyl phosphate + L-aspartate = N-carbamoyl-L-aspartate + phosphate + H(+). It functions in the pathway pyrimidine metabolism; UMP biosynthesis via de novo pathway; (S)-dihydroorotate from bicarbonate: step 2/3. Functionally, catalyzes the condensation of carbamoyl phosphate and aspartate to form carbamoyl aspartate and inorganic phosphate, the committed step in the de novo pyrimidine nucleotide biosynthesis pathway. The sequence is that of Aspartate carbamoyltransferase catalytic subunit from Anaeromyxobacter sp. (strain K).